The following is a 243-amino-acid chain: Ribonuclease 3 (243 aa).

The region spanning Ile-10–Gly-146 is the RNase III domain. Glu-59 lines the Mg(2+) pocket. Asp-63 is a catalytic residue. Mg(2+) contacts are provided by Asp-132 and Glu-135. Glu-135 is a catalytic residue. The DRBM domain occupies Asp-172 to Gln-241. Residues Gly-219–Ala-231 are compositionally biased toward basic and acidic residues. Residues Gly-219–Lys-243 are disordered.

The protein belongs to the ribonuclease III family. Homodimer. Mg(2+) is required as a cofactor.

It localises to the cytoplasm. The catalysed reaction is Endonucleolytic cleavage to 5'-phosphomonoester.. Its function is as follows. Digests double-stranded RNA. Involved in the processing of primary rRNA transcript to yield the immediate precursors to the large and small rRNAs (23S and 16S). Processes some mRNAs, and tRNAs when they are encoded in the rRNA operon. Processes pre-crRNA and tracrRNA of type II CRISPR loci if present in the organism. This chain is Ribonuclease 3, found in Staphylococcus aureus (strain bovine RF122 / ET3-1).